We begin with the raw amino-acid sequence, 396 residues long: Cytochrome c biogenesis protein Ccs1 (396 aa).

The next 3 helical transmembrane spans lie at 22 to 42 (LKFSITLFIIICIVSAIGTII), 79 to 99 (SNFYLILLLCLSFSLFFCSLK), and 162 to 182 (AGPLLIHLSLILILLGSAIHA).

This sequence belongs to the Ccs1/CcsB family. As to quaternary structure, may interact with CcsA.

It is found in the plastid. Its subcellular location is the chloroplast thylakoid membrane. In terms of biological role, required during biogenesis of c-type cytochromes (cytochrome c6 and cytochrome f) at the step of heme attachment. The sequence is that of Cytochrome c biogenesis protein Ccs1 from Cyanidium caldarium (Red alga).